Here is a 404-residue protein sequence, read N- to C-terminus: Multidrug resistance protein MdtG (404 aa).

11 helical membrane passes run 19–39, 56–76, 90–110, 113–133, 149–169, 171–191, 222–242, 254–274, 288–308, 317–337, and 376–396; these read LGCFLTGAAFSLVMPFLPLYV, LVFSITFLFSAIASPFWGGLA, LGMAIVMLLMGMAQNIWQFLI, ALLGLLGGFIPNANALIATQV, GVSGALLGPLAGGLLAGHYGL, PVFFITASVLFICFLLTFFFI, LFVTTLIIQVATGSIAPILTL, IAFISGMIASVPGVAALLSAP, ILIVALIISVLLLIPMSFVQT, FLLGAADGALLPAVQTLLVYN, and AVFCVTAGVVLFNAIYSWNSL.

It belongs to the major facilitator superfamily. DHA1 family. MdtG (TC 2.A.1.2.20) subfamily.

It localises to the cell inner membrane. In Salmonella paratyphi C (strain RKS4594), this protein is Multidrug resistance protein MdtG.